Reading from the N-terminus, the 223-residue chain is MIF4G domain-containing protein B (223 aa).

Residues 9 to 206 form the MIF4G domain; the sequence is DYKIQGFDAD…LEMIEYRAAG (198 aa).

The protein belongs to the MIF4GD family. Interacts with eif4g1, eif4g2 and slbp; probably tethered by SLBP to the 3'-end of mRNAs ending with the histone stem-loop, it also interacts with eif4g1 which is bound to their 5'-end.

The protein resides in the cytoplasm. It localises to the nucleus. Its function is as follows. Functions in replication-dependent translation of histone mRNAs which differ from other eukaryotic mRNAs in that they do not end with a poly-A tail but a stem-loop. May participate in circularizing those mRNAs specifically enhancing their translation. The sequence is that of MIF4G domain-containing protein B (mif4gd-b) from Xenopus laevis (African clawed frog).